A 197-amino-acid polypeptide reads, in one-letter code: Adenylyl-sulfate kinase (197 aa).

33 to 40 (GLSGSGKS) contributes to the ATP binding site. The active-site Phosphoserine intermediate is S107.

This sequence belongs to the APS kinase family.

It carries out the reaction adenosine 5'-phosphosulfate + ATP = 3'-phosphoadenylyl sulfate + ADP + H(+). Its pathway is sulfur metabolism; hydrogen sulfide biosynthesis; sulfite from sulfate: step 2/3. In terms of biological role, catalyzes the synthesis of activated sulfate. This is Adenylyl-sulfate kinase from Bacillus pumilus (strain SAFR-032).